The chain runs to 613 residues: Immunoglobulin superfamily member 8 (613 aa).

The first 27 residues, 1–27, serve as a signal peptide directing secretion; it reads MGALRPTLLPPSLPLLLLLMLGMGCWA. 4 consecutive Ig-like C2-type domains span residues 28-149, 162-286, 303-424, and 431-560; these read REVL…LRVL, PRGR…WAQI, SQLA…EAAS, and PVHV…WYQA. The Extracellular segment spans residues 28–579; the sequence is REVLVPEGPL…VYPYMHALDT (552 aa). A disulfide bond links Cys-49 and Cys-127. Asn-50 is a glycosylation site (N-linked (GlcNAc...) asparagine). Positions 155-174 are disordered; the sequence is VSAAPPGPRGRQAPTSPPRM. Cys-186 and Cys-270 form a disulfide bridge. The EWI motif signature appears at 274 to 276; it reads EWI. Disulfide bonds link Cys-326–Cys-406 and Cys-462–Cys-544. Residues Asn-327 and Asn-463 are each glycosylated (N-linked (GlcNAc...) asparagine). A Phosphoserine modification is found at Ser-518. Residues 580 to 600 form a helical membrane-spanning segment; sequence LFVPLLVGTGVALVTGATVLG. The Cytoplasmic portion of the chain corresponds to 601-613; that stretch reads TITCCFMKRLRKR. 2 S-palmitoyl cysteine lipidation sites follow: Cys-604 and Cys-605.

In terms of assembly, interacts directly with CD82, CD81/tetraspanin-28 and CD9/tetraspanin-29. Also interacts with integrin alpha-3/beta-1 and integrin alpha-4/beta-1. Interacts with HSPA8; this interaction modulates migratory and antigen-presenting capacities of dendritic cells. Expressed in brain, kidney, testis, liver and placenta with moderate expression in all other tissues. Detected on a majority of B-cells, T-cells, and natural killer cells. Expressed on dendritic cells.

It is found in the cell membrane. In terms of biological role, member of the immunoglobulin superfamily (IgSF) that links tetraspanin-enriched microdomains to the actin cytoskeleton and plays several important roles in innate and adaptive immunity. Acts as an inducible receptor of HSPA8 on dendritic cells to enhance the CCL21/SLC-dependent migration of activated mature dendritic cells while attenuating their antigen-specific stimulatory capacities. In complex with alpha-actinins ACTN1 and ACTN4, regulates actin dynamics in the immune synapse and subsequent T-cell activation. Inhibits the entry of several viruses such as hepatitis C Virus (HCV) or HIV-1. Mechanistically, promotes a change in CD81 organization at the plasma membrane by significantly restricting its diffusion which in turn influences CD81 interaction with Claudin-1/CLDN1, preventing CLDN1 from acting as a co-receptor required for HCV entry. Accumulates at the presynaptic terminal, the producer cell side of the virological synapse, to prevent HIV-1 Env-mediated cell-cell fusion. Highly expressed on malignant cells with antigen presentation defects, interacts with NK receptor KIR3DL2 to suppress NK-cell cytotoxicity. May participate in the regulation of neurite outgrowth and maintenance of the neural network in the adult brain. The chain is Immunoglobulin superfamily member 8 (IGSF8) from Homo sapiens (Human).